We begin with the raw amino-acid sequence, 54 residues long: Rubredoxin (54 aa).

At methionine 1 the chain carries N-formylmethionine. One can recognise a Rubredoxin-like domain in the interval 1-54 (MKKYTCTVCGYIYNPEDGDPDNGVNPGTDFKDIPDDWVCPLCGVGKDQFEEVEE). Residues cysteine 6, cysteine 9, cysteine 39, and cysteine 42 each contribute to the Fe cation site.

This sequence belongs to the rubredoxin family. The cofactor is Fe(3+).

In terms of biological role, rubredoxin is a small nonheme, iron protein lacking acid-labile sulfide. Its single Fe, chelated to 4 Cys, functions as an electron acceptor and may also stabilize the conformation of the molecule. In Clostridium pasteurianum, this protein is Rubredoxin.